The following is a 102-amino-acid chain: Large ribosomal subunit protein bL21 (102 aa).

Belongs to the bacterial ribosomal protein bL21 family. Part of the 50S ribosomal subunit. Contacts protein L20.

In terms of biological role, this protein binds to 23S rRNA in the presence of protein L20. This Bifidobacterium longum subsp. infantis (strain ATCC 15697 / DSM 20088 / JCM 1222 / NCTC 11817 / S12) protein is Large ribosomal subunit protein bL21.